Reading from the N-terminus, the 358-residue chain is Peptide chain release factor 1 (358 aa).

Q233 carries the N5-methylglutamine modification.

Belongs to the prokaryotic/mitochondrial release factor family. Methylated by PrmC. Methylation increases the termination efficiency of RF1.

The protein resides in the cytoplasm. Functionally, peptide chain release factor 1 directs the termination of translation in response to the peptide chain termination codons UAG and UAA. The sequence is that of Peptide chain release factor 1 from Lysinibacillus sphaericus (strain C3-41).